A 440-amino-acid chain; its full sequence is Xylose isomerase (440 aa).

Residues His100 and Asp103 contribute to the active site. The Mg(2+) site is built by Glu231, Glu267, His270, Asp295, Asp306, Asp308, and Asp338.

The protein belongs to the xylose isomerase family. As to quaternary structure, homotetramer. Mg(2+) serves as cofactor.

The protein resides in the cytoplasm. The enzyme catalyses alpha-D-xylose = alpha-D-xylulofuranose. In Burkholderia orbicola (strain MC0-3), this protein is Xylose isomerase.